The sequence spans 337 residues: DNA-directed RNA polymerase subunit alpha (337 aa).

The tract at residues 1 to 231 (MRNITTSAYT…KQLSVFDKIT (231 aa)) is alpha N-terminal domain (alpha-NTD). An alpha C-terminal domain (alpha-CTD) region spans residues 248 to 337 (NTKLLQNITD…IAELKAQNEG (90 aa)).

Belongs to the RNA polymerase alpha chain family. As to quaternary structure, homodimer. The RNAP catalytic core consists of 2 alpha, 1 beta, 1 beta' and 1 omega subunit. When a sigma factor is associated with the core the holoenzyme is formed, which can initiate transcription.

The catalysed reaction is RNA(n) + a ribonucleoside 5'-triphosphate = RNA(n+1) + diphosphate. Functionally, DNA-dependent RNA polymerase catalyzes the transcription of DNA into RNA using the four ribonucleoside triphosphates as substrates. The chain is DNA-directed RNA polymerase subunit alpha from Campylobacter jejuni subsp. jejuni serotype O:6 (strain 81116 / NCTC 11828).